Reading from the N-terminus, the 478-residue chain is Trigger factor (478 aa).

A compositionally biased stretch (basic and acidic residues) spans 154–167; it reads MAKDSRSFEPREEG. 2 disordered regions span residues 154 to 173 and 441 to 478; these read MAKDSRSFEPREEGAEAQSG and KEALFAEDDEADAVTGGAATDEKPSESNNEAAADKAAG. One can recognise a PPIase FKBP-type domain in the interval 173–258; the sequence is GDRVTIDFVG…VKAVAAPGET (86 aa).

It belongs to the FKBP-type PPIase family. Tig subfamily.

It localises to the cytoplasm. It carries out the reaction [protein]-peptidylproline (omega=180) = [protein]-peptidylproline (omega=0). Its function is as follows. Involved in protein export. Acts as a chaperone by maintaining the newly synthesized protein in an open conformation. Functions as a peptidyl-prolyl cis-trans isomerase. The sequence is that of Trigger factor from Methylorubrum extorquens (strain CM4 / NCIMB 13688) (Methylobacterium extorquens).